Reading from the N-terminus, the 269-residue chain is Oligoribonuclease, mitochondrial (269 aa).

Positions 55-227 (LVWIDCEMTG…SDIKESIAQL (173 aa)) constitute an Exonuclease domain. Residue Tyr-184 is part of the active site. Residues 240–269 (ETESVESIGSEQPESPSSSTSSLKRQRTDF) are disordered. A compositionally biased stretch (low complexity) spans 245–261 (ESIGSEQPESPSSSTSS).

The protein belongs to the oligoribonuclease family.

It is found in the mitochondrion. In terms of biological role, 3'-to-5' exoribonuclease specific for small oligoribonucleotides. This chain is Oligoribonuclease, mitochondrial (REX2), found in Saccharomyces cerevisiae (strain ATCC 204508 / S288c) (Baker's yeast).